Reading from the N-terminus, the 23-residue chain is Coenzyme PQQ synthesis protein A (23 aa).

The segment at residues 15–19 (EVTLY) is a cross-link (pyrroloquinoline quinone (Glu-Tyr)).

Belongs to the PqqA family.

It participates in cofactor biosynthesis; pyrroloquinoline quinone biosynthesis. Functionally, required for coenzyme pyrroloquinoline quinone (PQQ) biosynthesis. PQQ is probably formed by cross-linking a specific glutamate to a specific tyrosine residue and excising these residues from the peptide. The protein is Coenzyme PQQ synthesis protein A of Klebsiella pneumoniae (strain 342).